The following is a 157-amino-acid chain: Lipoprotein signal peptidase (157 aa).

The next 3 membrane-spanning stretches (helical) occupy residues 10 to 30 (LIFI…KYAI), 58 to 78 (FLEG…FIFL), and 84 to 104 (LFKN…SNVL). Active-site residues include Asp-114 and Asp-131. A helical membrane pass occupies residues 122-142 (FDFAIFNFADVMIDVGVGVLL).

Belongs to the peptidase A8 family.

It is found in the cell inner membrane. It carries out the reaction Release of signal peptides from bacterial membrane prolipoproteins. Hydrolyzes -Xaa-Yaa-Zaa-|-(S,diacylglyceryl)Cys-, in which Xaa is hydrophobic (preferably Leu), and Yaa (Ala or Ser) and Zaa (Gly or Ala) have small, neutral side chains.. Its pathway is protein modification; lipoprotein biosynthesis (signal peptide cleavage). Functionally, this protein specifically catalyzes the removal of signal peptides from prolipoproteins. The sequence is that of Lipoprotein signal peptidase from Helicobacter pylori (strain Shi470).